Here is a 352-residue protein sequence, read N- to C-terminus: Chorismate synthase (352 aa).

NADP(+)-binding residues include arginine 48 and arginine 54. FMN-binding positions include 125-127 (RSS), 238-239 (NA), glycine 278, 293-297 (KPTSS), and arginine 319.

Belongs to the chorismate synthase family. In terms of assembly, homotetramer. Requires FMNH2 as cofactor.

The catalysed reaction is 5-O-(1-carboxyvinyl)-3-phosphoshikimate = chorismate + phosphate. Its pathway is metabolic intermediate biosynthesis; chorismate biosynthesis; chorismate from D-erythrose 4-phosphate and phosphoenolpyruvate: step 7/7. Its function is as follows. Catalyzes the anti-1,4-elimination of the C-3 phosphate and the C-6 proR hydrogen from 5-enolpyruvylshikimate-3-phosphate (EPSP) to yield chorismate, which is the branch point compound that serves as the starting substrate for the three terminal pathways of aromatic amino acid biosynthesis. This reaction introduces a second double bond into the aromatic ring system. This chain is Chorismate synthase, found in Bordetella petrii (strain ATCC BAA-461 / DSM 12804 / CCUG 43448).